Consider the following 214-residue polypeptide: Probable transaldolase (214 aa).

The active-site Schiff-base intermediate with substrate is lysine 83.

This sequence belongs to the transaldolase family. Type 3B subfamily.

The protein resides in the cytoplasm. It catalyses the reaction D-sedoheptulose 7-phosphate + D-glyceraldehyde 3-phosphate = D-erythrose 4-phosphate + beta-D-fructose 6-phosphate. It participates in carbohydrate degradation; pentose phosphate pathway; D-glyceraldehyde 3-phosphate and beta-D-fructose 6-phosphate from D-ribose 5-phosphate and D-xylulose 5-phosphate (non-oxidative stage): step 2/3. In terms of biological role, transaldolase is important for the balance of metabolites in the pentose-phosphate pathway. This chain is Probable transaldolase, found in Desulfatibacillum aliphaticivorans.